The primary structure comprises 294 residues: Xyloglucan endotransglucosylase protein 34 (294 aa).

The signal sequence occupies residues 1-22 (MAAAYPWTLFLGMLVMVSGTMG). The GH16 domain occupies 23–221 (AALRKPVDVA…WSKAPFIASY (199 aa)). Glu-107 acts as the Nucleophile in catalysis. Glu-111 acts as the Proton donor in catalysis. Glu-111 lines the xyloglucan pocket. An N-linked (GlcNAc...) asparagine glycan is attached at Asn-115. Residues 124-126 (QTN), 134-136 (DRE), 200-201 (DW), and Gly-205 contribute to the xyloglucan site. 2 disulfides stabilise this stretch: Cys-229-Cys-238 and Cys-275-Cys-288. Arg-280 lines the xyloglucan pocket.

This sequence belongs to the glycosyl hydrolase 16 family. XTH group 1 subfamily. Post-translationally, contains at least one intrachain disulfide bond essential for its enzymatic activity. In terms of processing, N-glycosylated. Contains N-acetylglucosamine and mannose. Glycosylation is not essential for its catalytic activity. Expressed in mature gelatinous (G) cell wall layer of the tension wood fibers. Highly expressed in the outer zone of the G layer close to the secondary S2 layer. Not expressed in the mature walls of the ray cells or vessel elements (at protein level). Highest expression in both the phloem/cambium and differentiating xylem of the mature stem containing primarily secondary cell wall forming cells, in root tips and young roots. Expressed at low levels in apical bud.

The protein localises to the secreted. The protein resides in the cell wall. It localises to the extracellular space. It is found in the apoplast. Its subcellular location is the cytoplasm. It carries out the reaction breaks a beta-(1-&gt;4) bond in the backbone of a xyloglucan and transfers the xyloglucanyl segment on to O-4 of the non-reducing terminal glucose residue of an acceptor, which can be a xyloglucan or an oligosaccharide of xyloglucan.. Catalyzes xyloglucan endotransglycosylation (XET). Cleaves and religates xyloglucan polymers. Does not catalyze xyloglucan endohydrolysis (XEH). Involved in early phases of secondary (S) cell wall formation in fibers of the xylem and phloem vascular tissues of wood stems. May play a role in restructuring primary cell walls, possibly creating and reinforcing the connections between the primary and S cell wall layers. Functions in the gelatinous (G) layers of the tension wood fibers that are involved in bending of the wood stems. May play a role in G fiber shrinking by repairing broken xyloglucan cross-links between G and S2 cell wall layers via its XET activity to maintain connections between the layers. The protein is Xyloglucan endotransglucosylase protein 34 of Populus tremula x Populus tremuloides (Hybrid aspen).